The primary structure comprises 148 residues: uncharacterized protein (148 aa).

A compositionally biased stretch (low complexity) spans 1 to 17 (MCPPVRQRPAQAPPAKR). Disordered stretches follow at residues 1 to 86 (MCPP…VQSP) and 122 to 148 (RAHR…TSPC). Positions 38-57 (RPPKMQRRPRPPVAKRRRFP) are enriched in basic residues. Over residues 137-148 (QRPSPDSQTSPC) the composition is skewed to polar residues.

Belongs to the Epstein-Barr virus BLLF2 family.

This is an uncharacterized protein from Epstein-Barr virus (strain AG876) (HHV-4).